Consider the following 458-residue polypeptide: O-acyltransferase WSD (458 aa).

The Proton acceptor role is filled by H133.

The protein belongs to the long-chain O-acyltransferase family.

It carries out the reaction a long chain fatty alcohol + a fatty acyl-CoA = a wax ester + CoA. The catalysed reaction is an acyl-CoA + a 1,2-diacyl-sn-glycerol = a triacyl-sn-glycerol + CoA. The protein operates within glycerolipid metabolism; triacylglycerol biosynthesis. Functionally, bifunctional wax ester synthase/diacylglycerol acyltransferase (WS and DGAT). Catalyzes the terminal and only committed step in triacylglycerol synthesis by using diacylglycerol and fatty acyl CoA as substrates. Required for storage lipid synthesis. WS uses C(12)-CoA to C(18)-CoA substrates whereas DGAT prefers C(20)-CoA. Upon expression in E.coli and Pseudomonas citronellolis (DSM 50332) both WS and DGAT activities increase. This is O-acyltransferase WSD (wax-dgaT) from Acinetobacter baylyi (strain ATCC 33305 / BD413 / ADP1).